We begin with the raw amino-acid sequence, 909 residues long: Villin-1 (909 aa).

6 Gelsolin-like repeats span residues lysine 29–isoleucine 79, valine 149–alanine 189, glycine 262–lysine 305, leucine 391–alanine 448, methionine 529–glutamate 569, and leucine 631–glutamate 672. 2 disordered regions span residues serine 733 to glutamate 781 and aspartate 816 to arginine 835. The span at glutamine 752–glutamine 762 shows a compositional bias: basic and acidic residues. Serine 780 carries the post-translational modification Phosphoserine. Positions serine 844 to phenylalanine 909 constitute an HP domain.

Belongs to the villin/gelsolin family. Expressed in all tissues examined. Mainly detected in the vascular tissue and the pericycle of roots and in the vasculature of leaves. Not expressed in the root cap.

The protein localises to the cytoplasm. It localises to the cytoskeleton. Functionally, binds actin and actin filament bundles in a Ca(2+)/calmodulin-insensitive manner, but is unable to sever, cap, and nucleate actin filament formation in vitro. Does not protect individual filaments from severing by VLN3 (AC O81645). This chain is Villin-1, found in Arabidopsis thaliana (Mouse-ear cress).